The following is a 129-amino-acid chain: uncharacterized protein (129 aa).

This is an uncharacterized protein from Mycobacterium bovis (strain ATCC BAA-935 / AF2122/97).